We begin with the raw amino-acid sequence, 426 residues long: UDP-N-acetylglucosamine 1-carboxyvinyltransferase 2 (426 aa).

Position 22 to 23 (22 to 23 (KN)) interacts with phosphoenolpyruvate. Arg-92 provides a ligand contact to UDP-N-acetyl-alpha-D-glucosamine. The active-site Proton donor is Asp-116. UDP-N-acetyl-alpha-D-glucosamine-binding positions include 121–125 (RPIDQ), Asp-307, and Ile-329.

The protein belongs to the EPSP synthase family. MurA subfamily.

Its subcellular location is the cytoplasm. The enzyme catalyses phosphoenolpyruvate + UDP-N-acetyl-alpha-D-glucosamine = UDP-N-acetyl-3-O-(1-carboxyvinyl)-alpha-D-glucosamine + phosphate. Its pathway is cell wall biogenesis; peptidoglycan biosynthesis. Cell wall formation. Adds enolpyruvyl to UDP-N-acetylglucosamine. In Lactiplantibacillus plantarum (strain ATCC BAA-793 / NCIMB 8826 / WCFS1) (Lactobacillus plantarum), this protein is UDP-N-acetylglucosamine 1-carboxyvinyltransferase 2.